A 432-amino-acid chain; its full sequence is Amino-acid acetyltransferase (432 aa).

The N-acetyltransferase domain maps to 286-425 (ESLREATIED…ASLYNYQRNS (140 aa)).

Belongs to the acetyltransferase family. ArgA subfamily.

Its subcellular location is the cytoplasm. The catalysed reaction is L-glutamate + acetyl-CoA = N-acetyl-L-glutamate + CoA + H(+). It functions in the pathway amino-acid biosynthesis; L-arginine biosynthesis; N(2)-acetyl-L-ornithine from L-glutamate: step 1/4. The polypeptide is Amino-acid acetyltransferase (Ectopseudomonas mendocina (strain ymp) (Pseudomonas mendocina)).